The primary structure comprises 293 residues: DNA-directed RNA polymerase III subunit rpc6 (293 aa).

Belongs to the eukaryotic RPC34/RPC39 RNA polymerase subunit family. Component of the RNA polymerase III (Pol III) complex.

The protein resides in the nucleus. Functionally, DNA-dependent RNA polymerase catalyzes the transcription of DNA into RNA using the four ribonucleoside triphosphates as substrates. Specific peripheric component of RNA polymerase III which synthesizes small RNAs, such as 5S rRNA and tRNAs. May direct RNA Pol III binding to the TFIIIB-DNA complex. The polypeptide is DNA-directed RNA polymerase III subunit rpc6 (polr3f) (Dictyostelium discoideum (Social amoeba)).